We begin with the raw amino-acid sequence, 361 residues long: MSTVEDQLSLELETVNKDILLKKALLHYKDAIKSEREGNLGESLNKYRLAHKVHEDVESIYRRLERLQLCKRNEEEEMLNSDASEAMLTVSSVPSPTLTENESVNESVVPNILKLPDEVLLVILENCIRDLHDLRYLSSIALTCKHFAKALRADSLYRSFCYCSCEQKEWQQSIKSIEEELVEKYQQSWKTLFLKKPRSRFDGCYISVCRYFRPGTSDTSWNQPIHLITYYRYLRLYPNSTCIVYQSSNEPNDVVRNFSVQNTSLFSPMSSSPMFSNGNVALTGSWSMTPSGEMLIVYPASQTYTYVQKLQVRGIRLKWISFYSIHNYTSFTNEMPLTHNRDYVFSRVYSYTADSESLKRG.

Positions 105-157 (NESVVPNILKLPDEVLLVILENCIRDLHDLRYLSSIALTCKHFAKALRADSLY) constitute an F-box domain.

As to quaternary structure, interacts with skp1.

It localises to the cytoplasm. The polypeptide is F-box protein pof7 (pof7) (Schizosaccharomyces pombe (strain 972 / ATCC 24843) (Fission yeast)).